The sequence spans 64 residues: Large ribosomal subunit protein uL30 (64 aa).

Part of the 50S ribosomal subunit. The protein is methylated on either Ala-2 or Lys-3.

This chain is Large ribosomal subunit protein uL30, found in Rhodopseudomonas palustris (strain ATCC BAA-98 / CGA009).